An 897-amino-acid polypeptide reads, in one-letter code: Macoilin (897 aa).

Transmembrane regions (helical) follow at residues 113–133 (ICYL…YVWI), 157–177 (QSWP…FLRI), 181–201 (PILI…PVWP), and 204–224 (LNAF…TVSM). Polar residues-rich tracts occupy residues 291-304 (IQAA…SSKK) and 329-338 (GNSGFNSTPP). The disordered stretch occupies residues 291-375 (IQAASATPPT…DTSSSTIEDQ (85 aa)). Positions 351-361 (DMDDGDDSDDD) are enriched in acidic residues. The helical transmembrane segment at 379–399 (GGISIIRFIFSSAAWLFSFVF) threads the bilayer. Residues 403–413 (TPSENSLSNQQ) show a composition bias toward polar residues. Disordered regions lie at residues 403–535 (TPSE…QEED) and 724–770 (NGSS…SPVP). A compositionally biased stretch (acidic residues) spans 414 to 424 (IDDDEDYEDGD). Polar residues predominate over residues 432 to 451 (TDSMTSTTKGRANTMPSTTR). 2 stretches are compositionally biased toward low complexity: residues 452 to 467 (SQNN…QSNG) and 475 to 490 (SHQN…SNGH). Residues 503-726 (DTNASNETDI…VQEFQIKNGS (224 aa)) are a coiled coil. A compositionally biased stretch (basic and acidic residues) spans 510 to 535 (TDIRSMSRELESLRSEISSRRSQEED). Residues 734–761 (ETLMNGRSSTEANNENDTTASDQSSPHQ) are compositionally biased toward polar residues.

In terms of tissue distribution, strong expression in many neurons, very weak expression is also detected in others tissues.

It is found in the rough endoplasmic reticulum membrane. It localises to the nucleus membrane. In terms of biological role, plays a role in the regulation of neuronal activity. In AWA and AWC neurons, plays a role in regulating olfactory adaptation by controlling the forgetting sensory responses to odorants such as diacetyl and isoamyl alcohol. May play a role in regulating daf-7 expression in ASI neurons in response to bacterial small RNAs. In ASI neurons, promotes dauer formation in response to pheromones such as the ascarosides ascr#2 and ascr#3. The protein is Macoilin of Caenorhabditis elegans.